The following is a 77-amino-acid chain: Sec-independent protein translocase protein TatA (77 aa).

A helical transmembrane segment spans residues M1 to G21. Basic and acidic residues-rich tracts occupy residues E47 to A56 and T65 to A77. The disordered stretch occupies residues E47–A77.

The protein belongs to the TatA/E family. As to quaternary structure, the Tat system comprises two distinct complexes: a TatABC complex, containing multiple copies of TatA, TatB and TatC subunits, and a separate TatA complex, containing only TatA subunits. Substrates initially bind to the TatABC complex, which probably triggers association of the separate TatA complex to form the active translocon.

Its subcellular location is the cell inner membrane. In terms of biological role, part of the twin-arginine translocation (Tat) system that transports large folded proteins containing a characteristic twin-arginine motif in their signal peptide across membranes. TatA could form the protein-conducting channel of the Tat system. In Shewanella amazonensis (strain ATCC BAA-1098 / SB2B), this protein is Sec-independent protein translocase protein TatA.